The sequence spans 279 residues: uncharacterized protein (279 aa).

The next 6 membrane-spanning stretches (helical) occupy residues 29–49 (PYNMIAGAIGAVVLTILALVF), 77–97 (VLYALAPLIPLVILVIGGTSL), 105–125 (WTKMGVPQAMLIGAIYGIIVT), 147–167 (VLGIIIAASVFVAGLKSTGAV), 186–206 (TIGPFLMGLITGSGDAAAIAF), and 240–260 (PIAGVTIVCAGLAMVSPVEMV).

It belongs to the DcuC/DcuD transporter (TC 2.A.61) family.

The protein resides in the cell membrane. This is an uncharacterized protein from Haemophilus influenzae (strain ATCC 51907 / DSM 11121 / KW20 / Rd).